Reading from the N-terminus, the 189-residue chain is Putative OVARIAN TUMOR DOMAIN-containing deubiquitinating enzyme 8 (189 aa).

Positions 1-103 constitute an OTU domain; it reads MMKSDGNCQF…GIHFNSIYKK (103 aa). Asp-5 is a catalytic residue. Catalysis depends on Cys-8, which acts as the Nucleophile. His-96 is an active-site residue. The disordered stretch occupies residues 105 to 189; that stretch reads KEKGSRSSSS…NRNHHFHYSE (85 aa). Residues 120 to 181 adopt a coiled-coil conformation; sequence WMKLQRKKEN…KKEKKEKKNR (62 aa). 2 consecutive short sequence motifs (nuclear localization signal) follow at residues 125 to 132 and 163 to 170; these read RKKENEAK and KKKAKVQK. The segment covering 126–174 has biased composition (basic and acidic residues); the sequence is KKENEAKKKEEEEKERKDMEKEEKKKDKEDKKKDKEDKKKAKVQKEKKE. The span at 175–189 shows a compositional bias: basic residues; it reads KKEKKNRNHHFHYSE.

It belongs to the peptidase C85 family.

The protein localises to the nucleus. The enzyme catalyses Thiol-dependent hydrolysis of ester, thioester, amide, peptide and isopeptide bonds formed by the C-terminal Gly of ubiquitin (a 76-residue protein attached to proteins as an intracellular targeting signal).. In terms of biological role, hydrolase that can remove conjugated ubiquitin from proteins in vitro and may therefore play an important regulatory role at the level of protein turnover by preventing degradation. In Arabidopsis thaliana (Mouse-ear cress), this protein is Putative OVARIAN TUMOR DOMAIN-containing deubiquitinating enzyme 8.